Here is a 123-residue protein sequence, read N- to C-terminus: Small ribosomal subunit protein uS13 (123 aa).

A disordered region spans residues 97 to 123 (PCRGQRTHTNSRTRKGPRRGVMAKKKK).

The protein belongs to the universal ribosomal protein uS13 family. As to quaternary structure, part of the 30S ribosomal subunit. Forms a loose heterodimer with protein S19. Forms two bridges to the 50S subunit in the 70S ribosome.

Functionally, located at the top of the head of the 30S subunit, it contacts several helices of the 16S rRNA. In the 70S ribosome it contacts the 23S rRNA (bridge B1a) and protein L5 of the 50S subunit (bridge B1b), connecting the 2 subunits; these bridges are implicated in subunit movement. Contacts the tRNAs in the A and P-sites. This chain is Small ribosomal subunit protein uS13, found in Solidesulfovibrio magneticus (strain ATCC 700980 / DSM 13731 / RS-1) (Desulfovibrio magneticus).